The chain runs to 698 residues: Sucrose non-fermenting protein kinase 1 (698 aa).

The interval 1 to 48 (MAPRGFEDEELTISLSSSHVRRPQQQQPPPPTQQQHAHQPGSRPADAP) is disordered. The Protein kinase domain maps to 62–313 (YKVLRTLGEG…IEDIRADPWF (252 aa)). ATP contacts are provided by residues 68–76 (LGEGSFGKV) and lysine 91. Residue aspartate 184 is the Proton acceptor of the active site. Positions 320–417 (YLQLPVEEFF…ALLEPEGSSP (98 aa)) are auto-inhibitory domain (AID). In terms of domain architecture, UBA spans 360–397 (VTEKISKTMGYGKNDVEEALQASEPSAIKDAYMIVREN). Disordered stretches follow at residues 410–435 (LEPE…TTTA), 482–525 (TRTD…KKTK), and 564–597 (ESRH…IDPM). The segment covering 415–435 (SSPMLSMSSARSATSTTTTTA) has biased composition (low complexity). Composition is skewed to basic and acidic residues over residues 484–493 (TDAEKEETSR) and 564–573 (ESRHAEERAE).

It belongs to the protein kinase superfamily. CAMK Ser/Thr protein kinase family. SNF1 subfamily. In terms of assembly, component of the AMP-activated protein kinase complex also known as the SNF1 kinase complex (Snf1c), a heterotrimeric complex composed of a catalytic subunit alpha and 2 regulatory subunits beta and gamma.

Its subcellular location is the cytoplasm. It localises to the nucleus. The catalysed reaction is L-seryl-[protein] + ATP = O-phospho-L-seryl-[protein] + ADP + H(+). The enzyme catalyses L-threonyl-[protein] + ATP = O-phospho-L-threonyl-[protein] + ADP + H(+). Its function is as follows. Catalytic subunit of the AMP-activated protein kinase complex also known as the SNF1 kinase complex (Snf1c), a central regulator of cellular energy homeostasis, which, in response to a fall in intracellular ATP levels, activates energy-producing pathways and inhibits energy-consuming processes. The complex phosphorylates histone H3 to form H3S10ph, which promotes H3K14ac formation, leading to transcriptional activation through TBP recruitment to the promoters. Activates the expression of the galactose oxidase (GOA) gene and of several cell wall-degrading enzymes (CWDEs) such as pectate lyase, xylanase and glucanase. Plays an important role in sudden death syndrome (SDS) by controlling the colonization of the infected roots. This chain is Sucrose non-fermenting protein kinase 1, found in Fusarium virguliforme.